Consider the following 97-residue polypeptide: Type 1 phosphatases regulator YPI2 (97 aa).

Residues 1–97 (MNKKKTKICC…KMMEKKSNNT (97 aa)) are disordered. The span at 43-53 (ENDKDLGFDER) shows a compositional bias: basic and acidic residues. Positions 54–65 (RKRRVERRRRKL) are enriched in basic residues.

Belongs to the YPI1 family.

The protein resides in the nucleus. Its function is as follows. Regulator of type 1 phosphatases which maintains protein phosphatase activity under strict control. This is Type 1 phosphatases regulator YPI2 (YPI2) from Vanderwaltozyma polyspora (strain ATCC 22028 / DSM 70294 / BCRC 21397 / CBS 2163 / NBRC 10782 / NRRL Y-8283 / UCD 57-17) (Kluyveromyces polysporus).